An 81-amino-acid polypeptide reads, in one-letter code: Photosystem I iron-sulfur center (81 aa).

2 consecutive 4Fe-4S ferredoxin-type domains span residues 2–31 (SHAVKIYDTCIGCTQCVRACPLDVLEMVPW) and 39–68 (IASSPRTEDCVGCKRCETACPTDFLSIRVY). [4Fe-4S] cluster is bound by residues cysteine 11, cysteine 14, cysteine 17, cysteine 21, cysteine 48, cysteine 51, cysteine 54, and cysteine 58.

The cyanobacterial PSI reaction center is composed of one copy each of PsaA,B,C,D,E,F,I,J,K,L,M and X, and forms trimeric complexes. [4Fe-4S] cluster serves as cofactor.

The protein resides in the cellular thylakoid membrane. The enzyme catalyses reduced [plastocyanin] + hnu + oxidized [2Fe-2S]-[ferredoxin] = oxidized [plastocyanin] + reduced [2Fe-2S]-[ferredoxin]. Functionally, apoprotein for the two 4Fe-4S centers FA and FB of photosystem I (PSI); essential for photochemical activity. FB is the terminal electron acceptor of PSI, donating electrons to ferredoxin. The C-terminus interacts with PsaA/B/D and helps assemble the protein into the PSI complex. Required for binding of PsaD and PsaE to PSI. PSI is a plastocyanin/cytochrome c6-ferredoxin oxidoreductase, converting photonic excitation into a charge separation, which transfers an electron from the donor P700 chlorophyll pair to the spectroscopically characterized acceptors A0, A1, FX, FA and FB in turn. The polypeptide is Photosystem I iron-sulfur center (Prochlorococcus marinus (strain MIT 9312)).